Consider the following 184-residue polypeptide: Probable chemoreceptor glutamine deamidase CheD (184 aa).

Belongs to the CheD family.

The enzyme catalyses L-glutaminyl-[protein] + H2O = L-glutamyl-[protein] + NH4(+). Functionally, probably deamidates glutamine residues to glutamate on methyl-accepting chemotaxis receptors (MCPs), playing an important role in chemotaxis. The protein is Probable chemoreceptor glutamine deamidase CheD of Rhizobium johnstonii (strain DSM 114642 / LMG 32736 / 3841) (Rhizobium leguminosarum bv. viciae).